The chain runs to 506 residues: MDPVVIFLVLAFPIASVYLLFYHKKRVGGLSSPPGPRGLPFIGNFFQLYKAPCIHEYLWNLSKKYGSLMTLHMGSVPILVVSSPKMAKEVLKTQDLIYCSRPRMTGMRKLSYDGLDVAFSTYSEHWRHVRKLCTLELFTQKRAQLCFRLVHEQEVSRMIVRLSETAAASKDVNAFECFSNLSTSIISRVAFGKRYDEDGIGKERLQRMLSEIDAMLAGIFVSDFFPMFGWIDRLSGMRARLDRTFKEMDMFYEELIDEHLKPNRPESPTEDLIDVMLKNKGSSCLLTMDSIKAILLNVFNGGTGTSATLLVWAMTALMRNQGVMKKAQEDIRRVIGRKGNVDEDDIQNLSYLRAVVKETMRLYPTGPLLIPRETMESSIIGEDKDHMYMIKPKTLVYVSMWAIGRDPEIWKNPMEFVPERFLERPDLNYKGQQFEYIPFGAGRRICAGIHLGVTTVELALANLLYTFDWEPPAGTRFEDIDDETLNGLTLQKKNALYIRPKKYICP.

The chain crosses the membrane as a helical span at residues 3–23 (PVVIFLVLAFPIASVYLLFYH). The interval 365–370 (TGPLLI) is substrate specificity. Cys-446 contributes to the heme binding site.

This sequence belongs to the cytochrome P450 family. It depends on heme as a cofactor.

Its subcellular location is the microsome membrane. The enzyme catalyses xanthotoxin + reduced [NADPH--hemoprotein reductase] + O2 = 5-hydroxyxanthotoxin + oxidized [NADPH--hemoprotein reductase] + H2O + 2 H(+). The protein operates within secondary metabolite biosynthesis. In terms of biological role, involved in the biosynthesis of coumarins and furanocoumarins (FCs), natural products required for defense responses against attacks by predators with potential medical and agroindustrial usages such as anticoagulant, rodenticide and artificial vanilla substitutes. Catalyzes the conversion of xanthotoxin into 5-hydroxyxanthotoxin. The sequence is that of 5-OH-xanthotoxin synthase from Pastinaca sativa (Wild parsnip).